Here is a 608-residue protein sequence, read N- to C-terminus: Phosphomethylpyrimidine synthase (608 aa).

Residues asparagine 216, methionine 245, tyrosine 274, histidine 310, 330–332, 371–374, and glutamate 410 contribute to the substrate site; these read SRG and DGLR. Histidine 414 contributes to the Zn(2+) binding site. Tyrosine 437 lines the substrate pocket. Histidine 478 is a binding site for Zn(2+). Residues cysteine 558, cysteine 561, and cysteine 566 each coordinate [4Fe-4S] cluster.

This sequence belongs to the ThiC family. As to quaternary structure, homodimer. [4Fe-4S] cluster is required as a cofactor.

The catalysed reaction is 5-amino-1-(5-phospho-beta-D-ribosyl)imidazole + S-adenosyl-L-methionine = 4-amino-2-methyl-5-(phosphooxymethyl)pyrimidine + CO + 5'-deoxyadenosine + formate + L-methionine + 3 H(+). It functions in the pathway cofactor biosynthesis; thiamine diphosphate biosynthesis. In terms of biological role, catalyzes the synthesis of the hydroxymethylpyrimidine phosphate (HMP-P) moiety of thiamine from aminoimidazole ribotide (AIR) in a radical S-adenosyl-L-methionine (SAM)-dependent reaction. The protein is Phosphomethylpyrimidine synthase of Ruegeria sp. (strain TM1040) (Silicibacter sp.).